A 146-amino-acid polypeptide reads, in one-letter code: Acetyl-CoA decarbonylase/synthase complex subunit epsilon (146 aa).

The protein belongs to the CdhB family. Heterotetramer of two alpha and two epsilon subunits. The ACDS complex is made up of alpha, epsilon, beta, gamma and delta subunits with a probable stoichiometry of (alpha(2)epsilon(2))(4)-beta(8)-(gamma(1)delta(1))(8).

Its function is as follows. Part of a complex that catalyzes the reversible cleavage of acetyl-CoA, allowing autotrophic growth from CO(2). The alpha-epsilon subcomponent functions as a carbon monoxide dehydrogenase. The precise role of the epsilon subunit is unclear; it may have a stabilizing role within the alpha(2)epsilon(2) component and/or be involved in electron transfer to FAD during a potential FAD-mediated CO oxidation. This chain is Acetyl-CoA decarbonylase/synthase complex subunit epsilon, found in Methanocaldococcus jannaschii (strain ATCC 43067 / DSM 2661 / JAL-1 / JCM 10045 / NBRC 100440) (Methanococcus jannaschii).